The primary structure comprises 441 residues: GTPase Der (441 aa).

2 EngA-type G domains span residues 4 to 169 (SIVA…PPEA) and 178 to 353 (PRIA…QNRN). Residues 10-17 (GRPNVGKS), 57-61 (DTGGI), 120-123 (NKVD), 184-191 (GKPNVGKS), 231-235 (DTAGL), and 296-299 (NKWD) contribute to the GTP site. Residues 354–438 (LRISTGVLNE…SLKFFIRERK (85 aa)) form the KH-like domain.

Belongs to the TRAFAC class TrmE-Era-EngA-EngB-Septin-like GTPase superfamily. EngA (Der) GTPase family. In terms of assembly, associates with the 50S ribosomal subunit.

GTPase that plays an essential role in the late steps of ribosome biogenesis. The chain is GTPase Der from Lachnoclostridium phytofermentans (strain ATCC 700394 / DSM 18823 / ISDg) (Clostridium phytofermentans).